Reading from the N-terminus, the 261-residue chain is Carnitinyl-CoA dehydratase (261 aa).

Glutamate 111 serves as the catalytic Nucleophile. The Proton acceptor role is filled by glutamate 131.

Belongs to the enoyl-CoA hydratase/isomerase family.

The catalysed reaction is (R)-carnitinyl-CoA = crotonobetainyl-CoA + H2O. It participates in amine and polyamine metabolism; carnitine metabolism. Functionally, catalyzes the reversible dehydration of L-carnitinyl-CoA to crotonobetainyl-CoA. This chain is Carnitinyl-CoA dehydratase, found in Salmonella dublin (strain CT_02021853).